The primary structure comprises 506 residues: Glutamate--tRNA ligase (506 aa).

The 'HIGH' region signature appears at 29-39 (PSPTGTPHVGL). The short motif at 273–277 (KLSKR) is the 'KMSKS' region element. Lysine 276 is a binding site for ATP.

The protein belongs to the class-I aminoacyl-tRNA synthetase family. Glutamate--tRNA ligase type 1 subfamily. As to quaternary structure, monomer.

The protein localises to the cytoplasm. The catalysed reaction is tRNA(Glu) + L-glutamate + ATP = L-glutamyl-tRNA(Glu) + AMP + diphosphate. In terms of biological role, catalyzes the attachment of glutamate to tRNA(Glu) in a two-step reaction: glutamate is first activated by ATP to form Glu-AMP and then transferred to the acceptor end of tRNA(Glu). The protein is Glutamate--tRNA ligase of Paenarthrobacter aurescens (strain TC1).